Here is a 1001-residue protein sequence, read N- to C-terminus: Translation initiation factor IF-2 (1001 aa).

The interval 56–418 (PDYVHDPNAV…VEAGPPPISR (363 aa)) is disordered. A compositionally biased stretch (basic and acidic residues) spans 70-84 (TEAHEERHEHEEAHE). The segment covering 85–108 (PAAAPKAAVEPETPVAPAPEAAPA) has biased composition (low complexity). Residues 109–120 (AKEERPAPEEPA) show a composition bias toward basic and acidic residues. Pro residues-rich tracts occupy residues 136–170 (IHPP…PHAP), 180–194 (PARP…PSQT), 204–217 (RPAP…PTTT), 229–252 (QPFP…PPQQ), 305–322 (PAAP…PVPG), and 345–357 (GMPP…PRPQ). The span at 379–410 (SRGRPGDRRPVRQQRERTEEEKILRPQRRHVE) shows a compositional bias: basic and acidic residues. Residues 499-668 (RRAPVVTIMG…LLVADMQDLK (170 aa)) enclose the tr-type G domain. Residues 508–515 (GHVDHGKT) form a G1 region. 508–515 (GHVDHGKT) contributes to the GTP binding site. Residues 533-537 (GITQH) form a G2 region. Residues 554 to 557 (DTPG) form a G3 region. Residues 554–558 (DTPGH) and 608–611 (NKID) each bind GTP. A G4 region spans residues 608–611 (NKID). Positions 644–646 (SAR) are G5.

It belongs to the TRAFAC class translation factor GTPase superfamily. Classic translation factor GTPase family. IF-2 subfamily.

It localises to the cytoplasm. In terms of biological role, one of the essential components for the initiation of protein synthesis. Protects formylmethionyl-tRNA from spontaneous hydrolysis and promotes its binding to the 30S ribosomal subunits. Also involved in the hydrolysis of GTP during the formation of the 70S ribosomal complex. This Solibacter usitatus (strain Ellin6076) protein is Translation initiation factor IF-2.